Reading from the N-terminus, the 501-residue chain is Bifunctional pantoate ligase/cytidylate kinase (501 aa).

The segment at 1–264 (MLSTQAELAA…CGTTRLIDHS (264 aa)) is pantoate--beta-alanine ligase. An ATP-binding site is contributed by 25–32 (MGGLHQGH). The active-site Proton donor is histidine 32. Residue glutamine 55 participates in (R)-pantoate binding. Glutamine 55 lines the beta-alanine pocket. 144–147 (GEKD) provides a ligand contact to ATP. Glutamine 150 provides a ligand contact to (R)-pantoate. Residues valine 173 and 181–184 (LSSR) contribute to the ATP site. The segment at 265–501 (FLMTRQPLVA…PEEAWPTPAG (237 aa)) is cytidylate kinase.

It in the N-terminal section; belongs to the pantothenate synthetase family. This sequence in the C-terminal section; belongs to the cytidylate kinase family. Type 1 subfamily.

The protein localises to the cytoplasm. The enzyme catalyses (R)-pantoate + beta-alanine + ATP = (R)-pantothenate + AMP + diphosphate + H(+). The catalysed reaction is CMP + ATP = CDP + ADP. It carries out the reaction dCMP + ATP = dCDP + ADP. The protein operates within cofactor biosynthesis; (R)-pantothenate biosynthesis; (R)-pantothenate from (R)-pantoate and beta-alanine: step 1/1. Catalyzes the condensation of pantoate with beta-alanine in an ATP-dependent reaction via a pantoyl-adenylate intermediate. Functionally, catalyzes the transfer of a phosphate group from ATP to either CMP or dCMP to form CDP or dCDP and ADP, respectively. This is Bifunctional pantoate ligase/cytidylate kinase from Parasynechococcus marenigrum (strain WH8102).